Consider the following 72-residue polypeptide: Translation initiation factor IF-1 (72 aa).

Residues 1-72 (MSKEEAIEVE…TRGRITYRAK (72 aa)) form the S1-like domain.

The protein belongs to the IF-1 family. As to quaternary structure, component of the 30S ribosomal translation pre-initiation complex which assembles on the 30S ribosome in the order IF-2 and IF-3, IF-1 and N-formylmethionyl-tRNA(fMet); mRNA recruitment can occur at any time during PIC assembly.

The protein resides in the cytoplasm. Functionally, one of the essential components for the initiation of protein synthesis. Stabilizes the binding of IF-2 and IF-3 on the 30S subunit to which N-formylmethionyl-tRNA(fMet) subsequently binds. Helps modulate mRNA selection, yielding the 30S pre-initiation complex (PIC). Upon addition of the 50S ribosomal subunit IF-1, IF-2 and IF-3 are released leaving the mature 70S translation initiation complex. This chain is Translation initiation factor IF-1, found in Geobacter sulfurreducens (strain ATCC 51573 / DSM 12127 / PCA).